The primary structure comprises 155 residues: Large ribosomal subunit protein uL22 (155 aa).

The protein belongs to the universal ribosomal protein uL22 family. In terms of assembly, part of the 50S ribosomal subunit.

Functionally, this protein binds specifically to 23S rRNA. It makes multiple contacts with different domains of the 23S rRNA in the assembled 50S subunit and ribosome. The globular domain of the protein is located near the polypeptide exit tunnel on the outside of the subunit, while an extended beta-hairpin is found that lines the wall of the exit tunnel in the center of the 70S ribosome. This is Large ribosomal subunit protein uL22 from Pyrococcus abyssi (strain GE5 / Orsay).